A 506-amino-acid chain; its full sequence is Acrylate reductase flavoprotein subunit (506 aa).

The tat-type signal signal peptide spans 1–30 (MSNKDLLGRRNFIKGMGAAAGVAMAAPALA). Positions 54, 74, 82, 87, and 88 each coordinate FAD. Arg333 (proton donor) is an active-site residue. FAD contacts are provided by Glu473 and Ile489.

It belongs to the FAD-dependent oxidoreductase 2 family. FRD/SDH subfamily. As to quaternary structure, the ArdAB flavocytochrome c is composed of a FAD-containing subunit (ArdA) and a heme c-containing subunit (ArdB). It depends on FAD as a cofactor. Predicted to be exported by the Tat system. The position of the signal peptide cleavage has not been experimentally proven.

The protein localises to the periplasm. Methacrylate acts as a competitive inhibitor of the acrylate reductase activity and suppresses the reductase activity in dose-dependent manner. FAD-containing subunit of the ArdAB flavocytochrome c, which catalyzes the reduction of acrylate to propanoate and supports dimethylsulfoniopropionate-dependent anaerobic respiration. In vitro, can use the artificial electron donor methyl viologen. The natural electron donor is probably a low-potential cytochrome c. Also shows weak activity toward methacrylate in vitro (at a 22-fold lower rate) but cannot use other tested 2-enoates, including crotonic, fumaric, sorbic, urocanic, cinnamic, p-coumaric, caffeic or ferulic acids. The protein catalyzes a unidirectional reaction and cannot oxidize propanoate with phenazine metasulfate and dichlorophenolindophenol as electron acceptors. This chain is Acrylate reductase flavoprotein subunit, found in Shewanella woodyi (strain ATCC 51908 / MS32).